The chain runs to 517 residues: MALSSRAHAFSVEALMGRPSKRKAQDPREEMQPELQEEQFVEEGEEILRSPSRDSQQPEKRLKAESSKTVFSCSDESNSQESLQEESVIQVELQGSDLWKRFHDIGTEMIITKAGRRMFPSVRIKVKGMDPVKQYYVILDVVPVDSKRYRYVYHSSQWMVAGNTDHSCITPRFYVHPDSPCSGENWMRQIISFDRVKLTNNEMDDKGHIILQSMHKYNPRVHVVEQDSRIDLSLIESFPTEGVKTFSFKETEFTTVTAYQNQQITKLKIDRNPFAKGFRDPGRNRGVLDGFLETYPWMPSFSMDFKTFVTDTQSGSSGSSPVTSSGGAPSPLNSLLSPSCSPPMVYIPPSSFGMTYPDAYLHSVNIPFCYRICPTNNWRSQPFVLPTPERLPSFIIPQTLPPLMMEVPVVSSRGIINPNSGLHEDCNGQCLQASHSANQMLYGLQNPGNIFHPNAIAQEAISYPFHPPNGCYRYTISMPPRLENVASHLSENGTSQISFTEGSCDHSHWYPAINHYL.

The segment at 1 to 83 (MALSSRAHAF…SDESNSQESL (83 aa)) is disordered. The span at 35–45 (LQEEQFVEEGE) shows a compositional bias: acidic residues. Basic and acidic residues predominate over residues 46 to 66 (EILRSPSRDSQQPEKRLKAES). Residues 74 to 83 (SDESNSQESL) are compositionally biased toward low complexity. A DNA-binding region (T-box) is located at residues 93-280 (LQGSDLWKRF…RNPFAKGFRD (188 aa)). Positions 312-333 (TQSGSSGSSPVTSSGGAPSPLN) are disordered. Positions 314-333 (SGSSGSSPVTSSGGAPSPLN) are enriched in low complexity.

The protein localises to the nucleus. Functionally, probable transcriptional regulator involved in developmental processes. This is major determinant crucial to palatogenesis. The polypeptide is T-box transcription factor TBX22 (Tbx22) (Mus musculus (Mouse)).